Consider the following 152-residue polypeptide: Acidic phospholipase A2 homolog taipoxin gamma chain (152 aa).

A signal peptide spans 1–19; the sequence is MHPAHLLVLLAVCVSLLGS. Cystine bridges form between C38-C104, C42-C46, C54-C151, C56-C72, C71-C132, C78-C125, C88-C118, and C111-C123. N-linked (GlcNAc...) asparagine glycosylation is present at N97.

Belongs to the phospholipase A2 family. Group I subfamily. D49 sub-subfamily. In terms of assembly, heterotrimer of alpha, beta, and gamma chains; non-covalently linked. Contains 0.9% fucose, 2.2% mannose, 4.2% N-acetyl-D-glucosamine, 3.5% galactose, and 3.8% N-acetyl-neuraminic acid (sialic acid). Expressed by the venom gland.

It localises to the secreted. Functionally, heterotrimer: Snake venom phospholipase A2 (PLA2) heterotrimer that acts as a potent presynaptic neurotoxin by blocking synaptic transmission and synaptic vesicle recycling. May act by binding in a calcium-dependent fashion to neurotonal pentraxin-1 (NPTX1) and neurotonal pentraxin-2 (NPTX2), but not to neuronal pentraxin receptor (NPTXR). Also binds to taipoxin-associated calcium binding protein 49 (RCN2), a protein localized in the lumen of endoplasmic reticulum. In terms of biological role, monomer (gamma chain): Snake venom phospholipase A2 homolog that is neither toxic nor enzymatically active. Does not bind calcium. This is Acidic phospholipase A2 homolog taipoxin gamma chain from Oxyuranus scutellatus scutellatus (Australian taipan).